A 163-amino-acid polypeptide reads, in one-letter code: Putative 4-hydroxy-4-methyl-2-oxoglutarate aldolase (163 aa).

Residues 79–82 (GDQL) and Arg-101 contribute to the substrate site. Asp-102 provides a ligand contact to a divalent metal cation.

It belongs to the class II aldolase/RraA-like family. Homotrimer. Requires a divalent metal cation as cofactor.

It carries out the reaction 4-hydroxy-4-methyl-2-oxoglutarate = 2 pyruvate. The catalysed reaction is oxaloacetate + H(+) = pyruvate + CO2. Its function is as follows. Catalyzes the aldol cleavage of 4-hydroxy-4-methyl-2-oxoglutarate (HMG) into 2 molecules of pyruvate. Also contains a secondary oxaloacetate (OAA) decarboxylase activity due to the common pyruvate enolate transition state formed following C-C bond cleavage in the retro-aldol and decarboxylation reactions. This Dechloromonas aromatica (strain RCB) protein is Putative 4-hydroxy-4-methyl-2-oxoglutarate aldolase.